A 147-amino-acid polypeptide reads, in one-letter code: Large ribosomal subunit protein uL13 (147 aa).

Belongs to the universal ribosomal protein uL13 family. Part of the 50S ribosomal subunit.

Its function is as follows. This protein is one of the early assembly proteins of the 50S ribosomal subunit, although it is not seen to bind rRNA by itself. It is important during the early stages of 50S assembly. The polypeptide is Large ribosomal subunit protein uL13 (Lactobacillus acidophilus (strain ATCC 700396 / NCK56 / N2 / NCFM)).